The primary structure comprises 400 residues: Putative F-box protein At1g30920 (400 aa).

An F-box domain is found at 4–49 (EENTDSIPIDLILDILSRLPSKSIARCRCVSKLWESMIRQSYFTEL).

The chain is Putative F-box protein At1g30920 from Arabidopsis thaliana (Mouse-ear cress).